The chain runs to 328 residues: Adenosine receptor A1 (328 aa).

At 1 to 10 (MPPSISAFQA) the chain is on the extracellular side. A helical membrane pass occupies residues 11-33 (AYIGIEVLIALVSVPGNVLVIWA). Over 34 to 46 (VKVNQALRDATFC) the chain is Cytoplasmic. Residues 47 to 69 (FIVSLAVADVAVGALVIPLAILI) traverse the membrane as a helical segment. The Extracellular segment spans residues 70–80 (NIGPETYFHTC). Residues Cys80 and Cys169 are joined by a disulfide bond. The chain crosses the membrane as a helical span at residues 81 to 102 (LMVACPVLILTQSSILALLAIA). Residues 103-123 (VDRYLRVKIPLRYKAVVTPRR) lie on the Cytoplasmic side of the membrane. Residues 124-146 (AAVAIAGCWILSLVVGLTPMFGW) form a helical membrane-spanning segment. The Extracellular portion of the chain corresponds to 147–176 (NNLREVQRAWAANGSVGEPVIKCEFEKVIS). N-linked (GlcNAc...) asparagine glycosylation occurs at Asn159. The helical transmembrane segment at 177-201 (MEYMVYFNFFVWVLPPLLLMVLIYL) threads the bilayer. Residues 202–235 (EVFYLIRRQLSKKASASSGDPHKYYGKELKIAKS) are Cytoplasmic-facing. The chain crosses the membrane as a helical span at residues 236–259 (LALILFLFALSWLPLHILNCVTLF). At 260 to 267 (CPSCQKPS) the chain is on the extracellular side. Residues 268-292 (ILVYTAIFLTHGNSAMNPIVYAFRI) form a helical membrane-spanning segment. Topologically, residues 293–328 (HKFRVTFLKIWNDHFRCRPAPAGDGDEDLPEEKPND) are cytoplasmic. Cys309 carries the S-palmitoyl cysteine lipid modification.

Belongs to the G-protein coupled receptor 1 family.

The protein resides in the cell membrane. Receptor for adenosine. The activity of this receptor is mediated by G proteins which inhibit adenylyl cyclase. In Oryctolagus cuniculus (Rabbit), this protein is Adenosine receptor A1 (ADORA1).